A 338-amino-acid chain; its full sequence is Flap endonuclease 1 (338 aa).

Positions M1–R98 are N-domain. Residues D27, D80, E152, E154, D173, D175, and D236 each contribute to the Mg(2+) site. Positions E116–G257 are I-domain. The segment at S330–F338 is interaction with PCNA.

This sequence belongs to the XPG/RAD2 endonuclease family. FEN1 subfamily. Interacts with PCNA. PCNA stimulates the nuclease activity without altering cleavage specificity. Mg(2+) is required as a cofactor.

Structure-specific nuclease with 5'-flap endonuclease and 5'-3' exonuclease activities involved in DNA replication and repair. During DNA replication, cleaves the 5'-overhanging flap structure that is generated by displacement synthesis when DNA polymerase encounters the 5'-end of a downstream Okazaki fragment. Binds the unpaired 3'-DNA end and kinks the DNA to facilitate 5' cleavage specificity. Cleaves one nucleotide into the double-stranded DNA from the junction in flap DNA, leaving a nick for ligation. Also involved in the base excision repair (BER) pathway. Acts as a genome stabilization factor that prevents flaps from equilibrating into structures that lead to duplications and deletions. Also possesses 5'-3' exonuclease activity on nicked or gapped double-stranded DNA. The polypeptide is Flap endonuclease 1 (Methanococcoides burtonii (strain DSM 6242 / NBRC 107633 / OCM 468 / ACE-M)).